The chain runs to 156 residues: MSRRRVVQKRPVPPDSRYNSRLVSMMVRRIMRHGKKSVAHNIVYDALATIEERTGSDPLELFEKAVRNATPLVEVKARRVGGATYQVPMEVRSERGTTLALRWLIHFSRTRSGRSMASRLASELMDAANETGSAVRKREETHRMAEANKAFAHYRY.

Belongs to the universal ribosomal protein uS7 family. As to quaternary structure, part of the 30S ribosomal subunit. Contacts proteins S9 and S11.

One of the primary rRNA binding proteins, it binds directly to 16S rRNA where it nucleates assembly of the head domain of the 30S subunit. Is located at the subunit interface close to the decoding center, probably blocks exit of the E-site tRNA. The sequence is that of Small ribosomal subunit protein uS7 from Arthrospira platensis (Spirulina platensis).